Consider the following 189-residue polypeptide: dCTP deaminase (189 aa).

Residues 112-117, 136-138, Q157, Y171, and Q181 each bind dCTP; these read KSTYAR and TLE. Catalysis depends on E138, which acts as the Proton donor/acceptor.

This sequence belongs to the dCTP deaminase family. In terms of assembly, homotrimer.

It catalyses the reaction dCTP + H2O + H(+) = dUTP + NH4(+). The protein operates within pyrimidine metabolism; dUMP biosynthesis; dUMP from dCTP (dUTP route): step 1/2. Catalyzes the deamination of dCTP to dUTP. This chain is dCTP deaminase, found in Methylacidiphilum infernorum (isolate V4) (Methylokorus infernorum (strain V4)).